Consider the following 577-residue polypeptide: Zinc finger-containing ubiquitin peptidase 1 (577 aa).

The segment at 2 to 24 (LSCNICGETVNSEPDMKAHLIVH) adopts a C2H2-type 1 zinc-finger fold. The segment at 29 to 52 (IICPFCKLSGINYNEICFHIETVH) adopts a C2H2-type 2; atypical zinc-finger fold. Positions 124–137 (ESRKYQKSREKKPG) are enriched in basic and acidic residues. The interval 124-145 (ESRKYQKSREKKPGLSEAQGSI) is disordered. The segment at 153-176 (PECPFCGKIEGCSQDMEIHVKTKH) adopts a C2H2-type 3; atypical zinc-finger fold. Residues 192-214 (YDCPMCGLVCTNYHILQEHVDLH) form a C2H2-type 4 zinc finger. Residues 225–247 (DRVQCSSDRELAHRLQQEEDRKR) form an MIU region. The disordered stretch occupies residues 238–260 (RLQQEEDRKRKSEESRQEREEFQ). The tract at residues 248–273 (KSEESRQEREEFQKLQRQYGLDNSGG) is zUBD/ZHA. K261 bears the N6-acetyllysine mark. Residue C359 is the Nucleophile of the active site. H490 (proton acceptor) is an active-site residue. The active site involves D511.

It belongs to the peptidase C78 family. ZUFSP subfamily. Interacts with RPA1 and RPA2.

Its subcellular location is the cytoplasm. The protein resides in the nucleus. The enzyme catalyses Thiol-dependent hydrolysis of ester, thioester, amide, peptide and isopeptide bonds formed by the C-terminal Gly of ubiquitin (a 76-residue protein attached to proteins as an intracellular targeting signal).. Its function is as follows. Deubiquitinase with endodeubiquitinase activity that specifically interacts with and cleaves 'Lys-63'-linked long polyubiquitin chains. Shows only weak activity against 'Lys-11' and 'Lys-48'-linked chains. Plays an important role in genome stability pathways, functioning to prevent spontaneous DNA damage and also promote cellular survival in response to exogenous DNA damage. Modulates the ubiquitination status of replication protein A (RPA) complex proteins in response to replication stress. The chain is Zinc finger-containing ubiquitin peptidase 1 from Mus musculus (Mouse).